The primary structure comprises 557 residues: Probable protein kinase UbiB (557 aa).

The Protein kinase domain maps to 121–509; it reads AFDTTPLASA…RKLQTRVVTA (389 aa). ATP-binding positions include 127–135 and K154; that span reads LASASIAQV. The active-site Proton acceptor is the D289. 2 consecutive transmembrane segments (helical) span residues 506-526 and 535-555; these read VVTA…YGLH and VPVW…IAWL.

It belongs to the ABC1 family. UbiB subfamily.

It localises to the cell inner membrane. It functions in the pathway cofactor biosynthesis; ubiquinone biosynthesis [regulation]. Functionally, is probably a protein kinase regulator of UbiI activity which is involved in aerobic coenzyme Q (ubiquinone) biosynthesis. The polypeptide is Probable protein kinase UbiB (Xanthomonas campestris pv. campestris (strain 8004)).